The primary structure comprises 879 residues: Leucine--tRNA ligase (879 aa).

The 'HIGH' region motif lies at 45–55 (PYPSGALHMGH). Residues 637–641 (KMSKS) carry the 'KMSKS' region motif. Lys-640 is a binding site for ATP.

The protein belongs to the class-I aminoacyl-tRNA synthetase family.

It is found in the cytoplasm. It catalyses the reaction tRNA(Leu) + L-leucine + ATP = L-leucyl-tRNA(Leu) + AMP + diphosphate. This chain is Leucine--tRNA ligase, found in Xylella fastidiosa (strain M23).